The chain runs to 240 residues: Ubiquinone biosynthesis O-methyltransferase (240 aa).

Positions 44, 64, 85, and 129 each coordinate S-adenosyl-L-methionine.

The protein belongs to the methyltransferase superfamily. UbiG/COQ3 family.

The enzyme catalyses a 3-demethylubiquinol + S-adenosyl-L-methionine = a ubiquinol + S-adenosyl-L-homocysteine + H(+). It catalyses the reaction a 3-(all-trans-polyprenyl)benzene-1,2-diol + S-adenosyl-L-methionine = a 2-methoxy-6-(all-trans-polyprenyl)phenol + S-adenosyl-L-homocysteine + H(+). Its pathway is cofactor biosynthesis; ubiquinone biosynthesis. Functionally, O-methyltransferase that catalyzes the 2 O-methylation steps in the ubiquinone biosynthetic pathway. The protein is Ubiquinone biosynthesis O-methyltransferase of Escherichia coli O9:H4 (strain HS).